The sequence spans 319 residues: Zinc metalloproteinase/disintegrin (319 aa).

Residues 1–28 (EDEAPKMCGVTQNWESYEPIKKASQSNL) constitute a propeptide that is removed on maturation. A Peptidase M12B domain is found at 34–230 (RYIELVIVAD…QKPQCILNKP (197 aa)). Residues Glu-37 and Asp-121 each contribute to the Ca(2+) site. Cystine bridges form between Cys-145–Cys-225, Cys-185–Cys-209, and Cys-187–Cys-192. A Zn(2+)-binding site is contributed by His-170. Glu-171 is an active-site residue. The Zn(2+) site is built by His-174 and His-180. Ca(2+) contacts are provided by Cys-225 and Asn-228. Residues 231 to 246 (LRTDTVSTPVSGNELL) constitute a propeptide that is removed on maturation. The Disintegrin domain maps to 238-319 (TPVSGNELLE…AGCPRNPFHA (82 aa)). 6 disulfide bridges follow: Cys-252-Cys-267, Cys-254-Cys-262, Cys-261-Cys-284, Cys-275-Cys-281, Cys-280-Cys-305, and Cys-293-Cys-312. The Cell attachment site signature appears at 297–299 (RGD).

Belongs to the venom metalloproteinase (M12B) family. P-II subfamily. P-IIa sub-subfamily. As to quaternary structure, monomer. Zn(2+) serves as cofactor. Expressed by the venom gland.

It is found in the secreted. Its activity is regulated as follows. Excess of calcium ions significantly suppress the autoproteolysis of the enzyme. Metalloproteinase that impairs hemostasis in the envenomed animal. Shows autoproteolysis dependent on pH and temperature. Does not show hemorrhagic activity. In terms of biological role, inhibits platelet aggregation induced by ADP (IC(50) is 200 nM), collagen (IC(50) is 500 nM), thrombin and epinephrin (IC(50) is 300 nM). Does not inhibit aggregation induced by ristocetin. Functionally, inhibits platelet aggregation induced by ADP (IC(50) is 100 nM), collagen (IC(50) is 500 nM), thrombin and epinephrin (IC(50) is 300 nM). Does not inhibit aggregation induced by ristocetin. Significantly inhibits angiogenesis both in vivo and in vitro. This is Zinc metalloproteinase/disintegrin from Gloydius brevicauda (Korean slamosa snake).